The following is a 307-amino-acid chain: Acetaldehyde dehydrogenase (307 aa).

Position 12-15 (12-15 (SGNI)) interacts with NAD(+). Cys127 acts as the Acyl-thioester intermediate in catalysis. Residues 158 to 166 (SAGPGTRQN) and Asn278 each bind NAD(+).

The protein belongs to the acetaldehyde dehydrogenase family. In terms of assembly, monomer. Can also form a heterotetramer composed of two aldolase (TTHB246) and two dehydrogenase (TTHB247) subunits. Upon complex formation, the aldolase shows a 5-fold increase in substrate affinity, while the dehydrogenase shows a 3-fold decrease; the kcat values of each enzyme are reduced by 2-fold when they are in a complex.

It catalyses the reaction acetaldehyde + NAD(+) + CoA = acetyl-CoA + NADH + H(+). The enzyme catalyses propanal + NAD(+) + CoA = propanoyl-CoA + NADH + H(+). Its function is as follows. Catalyzes the conversion of acetaldehyde or propanal to acetyl-CoA or propanoyl-CoA, respectively, using NAD(+) and coenzyme A. The aldehyde substrates can be directly channeled from the aldolase TTHB246 to the dehydrogenase TTHB247. Is the final enzyme in the meta-cleavage pathway for the degradation of aromatic compounds. The sequence is that of Acetaldehyde dehydrogenase from Thermus thermophilus (strain ATCC 27634 / DSM 579 / HB8).